Consider the following 455-residue polypeptide: UDP-N-acetylmuramate--L-alanine ligase (455 aa).

109–115 is an ATP binding site; the sequence is GTHGKTT.

This sequence belongs to the MurCDEF family.

Its subcellular location is the cytoplasm. It catalyses the reaction UDP-N-acetyl-alpha-D-muramate + L-alanine + ATP = UDP-N-acetyl-alpha-D-muramoyl-L-alanine + ADP + phosphate + H(+). Its pathway is cell wall biogenesis; peptidoglycan biosynthesis. Functionally, cell wall formation. The protein is UDP-N-acetylmuramate--L-alanine ligase of Caldicellulosiruptor bescii (strain ATCC BAA-1888 / DSM 6725 / KCTC 15123 / Z-1320) (Anaerocellum thermophilum).